Here is a 374-residue protein sequence, read N- to C-terminus: Ribosomal RNA large subunit methyltransferase G (374 aa).

The protein belongs to the methyltransferase superfamily. RlmG family.

The protein localises to the cytoplasm. It carries out the reaction guanosine(1835) in 23S rRNA + S-adenosyl-L-methionine = N(2)-methylguanosine(1835) in 23S rRNA + S-adenosyl-L-homocysteine + H(+). In terms of biological role, specifically methylates the guanine in position 1835 (m2G1835) of 23S rRNA. This chain is Ribosomal RNA large subunit methyltransferase G, found in Pseudomonas aeruginosa (strain UCBPP-PA14).